Reading from the N-terminus, the 69-residue chain is DNA gyrase inhibitor YacG (69 aa).

Zn(2+) is bound by residues Cys-7, Cys-10, Cys-26, and Cys-30.

It belongs to the DNA gyrase inhibitor YacG family. In terms of assembly, interacts with GyrB. It depends on Zn(2+) as a cofactor.

Functionally, inhibits all the catalytic activities of DNA gyrase by preventing its interaction with DNA. Acts by binding directly to the C-terminal domain of GyrB, which probably disrupts DNA binding by the gyrase. This chain is DNA gyrase inhibitor YacG, found in Shewanella sp. (strain ANA-3).